Consider the following 405-residue polypeptide: 5-azacytidine-induced protein 2 (405 aa).

The homodimerization stretch occupies residues 1–198 (MDTLVEDDIC…TELQKARQTG (198 aa)). Positions 40 to 197 (ALVTAYEDIK…RTELQKARQT (158 aa)) form a coiled coil. Residues 229–270 (SDNMQHAYWELKREMSNLHLVTQVQAELLRKLKTSAAVKKAC) form an interaction with TBK1 and IKBKE region. Phosphoserine occurs at positions 331 and 366. The segment at 357 to 377 (LEDNSWVFPSPPKSSETAFGE) is disordered.

In terms of assembly, homodimer. Interacts with IKBKE and TBK1. Interacts with TICAM1. Interacts with TAX1BP1. Interacts with CALCOCO2. In terms of processing, ubiquitinated via 'Lys-48'-linked polyubiquitination by TRIM38, leading to its degradation. Testis, ovary, heart, lung, kidney and brain. Expressed mainly in the spermatocytes or spermatids in the testis.

Its subcellular location is the cytoplasm. Adapter protein which binds TBK1 and IKBKE playing a role in antiviral innate immunity. Activates serine/threonine-protein kinase TBK1 and facilitates its oligomerization. Enhances the phosphorylation of NF-kappa-B p65 subunit RELA by TBK1. Promotes TBK1-induced as well as TNF-alpha or PMA-induced activation of NF-kappa-B. Participates in IFNB promoter activation via TICAM1. This chain is 5-azacytidine-induced protein 2 (Azi2), found in Mus musculus (Mouse).